A 343-amino-acid polypeptide reads, in one-letter code: NADP-dependent alkenal double bond reductase P2 (343 aa).

2 residues coordinate substrate: tyrosine 52 and tyrosine 79. NADP(+)-binding positions include 164–167 (GAVG), lysine 190, tyrosine 206, asparagine 230, 252–258 (CGMISQY), 282–284 (FVV), and asparagine 332.

Belongs to the NADP-dependent oxidoreductase L4BD family. As to quaternary structure, homodimer.

The enzyme catalyses an n-alkanal + NAD(+) = an alk-2-enal + NADH + H(+). It catalyses the reaction an n-alkanal + NADP(+) = an alk-2-enal + NADPH + H(+). Catalyzes the reduction of the 7-8 double bond of phenylpropanal substrates, such as p-coumaryl aldehyde and coniferyl aldehyde (in vitro). Has activity towards toxic substrates, such as 4-hydroxy-(2E)-nonenal (in vitro). May play a distinct role in plant antioxidant defense and is possibly involved in NAD(P)/NAD(P)h homeostasis. In Arabidopsis thaliana (Mouse-ear cress), this protein is NADP-dependent alkenal double bond reductase P2 (P2).